We begin with the raw amino-acid sequence, 93 residues long: Chaperone NapD (93 aa).

It belongs to the NapD family. Interacts with the cytoplasmic NapA precursor.

It localises to the cytoplasm. In terms of biological role, chaperone for NapA, the catalytic subunit of the periplasmic nitrate reductase. It binds directly and specifically to the twin-arginine signal peptide of NapA, preventing premature interaction with the Tat translocase and premature export. This Haemophilus influenzae (strain ATCC 51907 / DSM 11121 / KW20 / Rd) protein is Chaperone NapD.